The primary structure comprises 483 residues: Sphingomyelin phosphodiesterase 5 (483 aa).

The tract at residues 1–20 (MSLPDISRRRSPVPQEDWPL) is disordered. The chain crosses the membrane as a helical span at residues 80 to 100 (VLLPLVVVGLPLALVGLALWL). Residue Glu209 participates in Mg(2+) binding. His471 functions as the Proton acceptor in the catalytic mechanism.

The protein belongs to the neutral sphingomyelinase family. The cofactor is Mg(2+). Mn(2+) serves as cofactor. In terms of tissue distribution, highly expressed in testis, pancreas, epididymis, and brain.

Its subcellular location is the mitochondrion inner membrane. It is found in the endoplasmic reticulum membrane. The enzyme catalyses a sphingomyelin + H2O = phosphocholine + an N-acylsphing-4-enine + H(+). The catalysed reaction is N-(hexadecanoyl)-sphing-4-enine-1-phosphocholine + H2O = N-hexadecanoylsphing-4-enine + phosphocholine + H(+). The protein operates within lipid metabolism; sphingolipid metabolism. With respect to regulation, activated by anionic phospholipids, specially cardiolipin and phosphatidylserine. Its function is as follows. Catalyzes the hydrolysis of membrane sphingomyelin to form phosphorylcholine and ceramide. This chain is Sphingomyelin phosphodiesterase 5, found in Mus musculus (Mouse).